Here is a 560-residue protein sequence, read N- to C-terminus: MAKKVAVIGAGVSGLSSIKCCLDENLEPTCFERTSDFGGLWKFADTSEDGMTRVYRSLVTNVCKEMSCYSDFPFREDYPNFMSHEKFWDYLREFAEHFGLLRYIRFKTTVLSVTKRPDFSETGQWDVVTETEGKRDRAVFDAVMVCTGQFLSPHLPLESFPGIHKFKGQILHSQEYRIPDAFRGKRILVVGLGNTGGDIAVELSEIAAQVFLSTRTGTWVLSRSSPGGYPFNMIQTRWLNFLVRVLPSRFINWTHERKMNKILNHENYGLSIAKGKKPKFIVNDELPTCILCGKVTMKTSVKDFTESSVIFEDGTTEANIDVVIFTTGYEFSFPFFEEPLKSLCTKKIILYKRVFPPNLERATLAIIGLISLNGSILVGTEFQARWATRVFKGLCSIPPSQKLMAEATKTEQLIKRGVIKDTSQDKLDFITYMDELTQCIGAKPSIPLLFIKDPRLAWEVFFGPCTPYQYRLVGPGRWDGARNAILTQWDRTLKPLKTRIVPKSPEPTSLSHYLIAWGAPVLLVSLLLIYKSSHFLELVQGKLPRRFPPYRLLWYMPQNS.

FAD contacts are provided by residues 9–13 (GAGVS), glutamate 32, and 40–41 (LW). NADP(+) is bound by residues 60 to 61 (TN) and 195 to 198 (TGGD). Residues 510–530 (LSHYLIAWGAPVLLVSLLLIY) traverse the membrane as a helical segment.

This sequence belongs to the FMO family. FAD serves as cofactor.

The protein localises to the microsome membrane. It localises to the endoplasmic reticulum membrane. The catalysed reaction is N,N-dimethylaniline + NADPH + O2 + H(+) = N,N-dimethylaniline N-oxide + NADP(+) + H2O. In terms of biological role, this protein is involved in the oxidative metabolism of a variety of xenobiotics such as drugs and pesticides. In Mus musculus (Mouse), this protein is Dimethylaniline monooxygenase [N-oxide-forming] 4 (Fmo4).